The sequence spans 496 residues: MKKATVGAVVVGTAAAVAVAALIMRHRMGKSSKWARARAILKEFEEKCATPDGKLKQVADAMTVEMHAGLASEGGSKLKMLISYVDNLPTGDEGGVFYALDLGGTNFRVLRVQLGGKDGGIIHQEFAEASIPPNLMVGTSEALFDYIAAELAKFVAEEGEEFHPPPGRQRELGFTFSFPIMQTSINSGTLIRWTKGFSIDDTVGKDVVAELTKAMQKREIDMRVSALVNDTVGTLAGGRFTNKDVSIAVILGTGTNAAYVERAQAIPKWHGPLPKSGEMVINMEWGNFRSSHLPLTEYDHAMDTNSLNPGEQIFEKICSGMYLGEILRRVLLRMAEEAGIFGEEVPPKLKNSFILRTPEMSAMHHDTSSDLRVVGDKLKDILEISNSSLKTRRLVVELCNIVATRGARLAAAGILGIIKKMGKDTPRESGPEKIVVAMDGGLYEHYTEYSKCLENTLVELLGKEMATSIVFKHANDGSGIGAALLAASNSVYVEDK.

The helical transmembrane segment at 4–24 threads the bilayer; sequence ATVGAVVVGTAAAVAVAALIM. In terms of domain architecture, Hexokinase spans 35 to 487; it reads ARARAILKEF…SGIGAALLAA (453 aa). The hexokinase small subdomain stretch occupies residues 90–228; it reads TGDEGGVFYA…EIDMRVSALV (139 aa). Positions 104, 105, and 106 each coordinate ADP. Positions 194, 195, 229, and 230 each coordinate D-glucose. The tract at residues 229–476 is hexokinase large subdomain; sequence NDTVGTLAGG…TSIVFKHAND (248 aa). An ADP-binding site is contributed by Thr-253. Asn-256, Glu-284, and Glu-315 together coordinate D-glucose. ADP is bound at residue Gly-441.

Belongs to the hexokinase family.

The protein localises to the plastid. It localises to the chloroplast outer membrane. The enzyme catalyses a D-hexose + ATP = a D-hexose 6-phosphate + ADP + H(+). It carries out the reaction D-fructose + ATP = D-fructose 6-phosphate + ADP + H(+). The catalysed reaction is D-glucose + ATP = D-glucose 6-phosphate + ADP + H(+). It participates in carbohydrate metabolism; hexose metabolism. Its pathway is carbohydrate degradation; glycolysis; D-glyceraldehyde 3-phosphate and glycerone phosphate from D-glucose: step 1/4. In terms of biological role, fructose and glucose phosphorylating enzyme. May be involved in the phosphorylation of glucose during the export from plastids to cytosol. Seems neither to be involved in cell sugar sensing nor in carbohydrate metabolism in tuber. The chain is Hexokinase-2 (HXK2) from Solanum tuberosum (Potato).